The following is a 161-amino-acid chain: Putative 4-hydroxy-4-methyl-2-oxoglutarate aldolase (161 aa).

Residues 77 to 80 (GGNL) and R99 contribute to the substrate site. Residue D100 participates in a divalent metal cation binding.

Belongs to the class II aldolase/RraA-like family. In terms of assembly, homotrimer. A divalent metal cation is required as a cofactor.

The catalysed reaction is 4-hydroxy-4-methyl-2-oxoglutarate = 2 pyruvate. The enzyme catalyses oxaloacetate + H(+) = pyruvate + CO2. Its function is as follows. Catalyzes the aldol cleavage of 4-hydroxy-4-methyl-2-oxoglutarate (HMG) into 2 molecules of pyruvate. Also contains a secondary oxaloacetate (OAA) decarboxylase activity due to the common pyruvate enolate transition state formed following C-C bond cleavage in the retro-aldol and decarboxylation reactions. In Methylococcus capsulatus (strain ATCC 33009 / NCIMB 11132 / Bath), this protein is Putative 4-hydroxy-4-methyl-2-oxoglutarate aldolase.